The following is a 428-amino-acid chain: UPF0229 protein YeaH (428 aa).

Positions 78–90 are enriched in basic and acidic residues; it reads GNDHFIQNDRIER. The tract at residues 78–111 is disordered; that stretch reads GNDHFIQNDRIERPQGGGGGGSGSGQGQASQDGE. Residues 92–103 show a composition bias toward gly residues; sequence QGGGGGGSGSGQ.

It belongs to the UPF0229 family.

The sequence is that of UPF0229 protein YeaH from Salmonella choleraesuis (strain SC-B67).